A 96-amino-acid polypeptide reads, in one-letter code: UPF0235 protein YggU (96 aa).

It belongs to the UPF0235 family.

In Salmonella arizonae (strain ATCC BAA-731 / CDC346-86 / RSK2980), this protein is UPF0235 protein YggU.